A 614-amino-acid chain; its full sequence is NEDD8 ultimate buster 1 (614 aa).

Coiled-coil stretches lie at residues 36 to 71 (LAVK…IERG) and 151 to 206 (NVKA…MVVD). 3 consecutive UBA domains span residues 373-413 (YIDP…ISNR), 423-469 (EEKE…LLSN), and 488-528 (SPSQ…LAHH). Residues 413–430 (RREELAQIRKEEKEKRRR) carry the Nuclear localization signal motif. Residues 426-473 (EKRRRRLENVNTLRGMGYSTQAAKQALHQARGNLDDALKVLLSNPHMW) are NEDD8-binding 1. The tract at residues 531-590 (SLPPDLQFSGEDSSPTPSTSPSDSAGTSSASTDEDMETEAVNEILEDIPEHEEDYLDSTL) is disordered. A compositionally biased stretch (low complexity) spans 539–561 (SGEDSSPTPSTSPSDSAGTSSAS). Residues 549–597 (TSPSDSAGTSSASTDEDMETEAVNEILEDIPEHEEDYLDSTLEDEEVII) are NEDD8-binding 2. The segment covering 562–590 (TDEDMETEAVNEILEDIPEHEEDYLDSTL) has biased composition (acidic residues).

In terms of assembly, directly interacts with NEDD8 and PSMD4/S5a, a member of the regulatory subunit of the 26S proteasome. Interacts with AIPL1. The interaction with UBD via UBA domains facilitates the linking of UBD-conjugated target protein to the proteasome complex and accelerates UBD degradation and that of its conjugates.

The protein resides in the nucleus. In terms of biological role, specific down-regulator of the NEDD8 conjugation system. Recruits NEDD8, UBD, and their conjugates to the proteasome for degradation. The chain is NEDD8 ultimate buster 1 (Nub1) from Mus musculus (Mouse).